Consider the following 234-residue polypeptide: Biosynthetic peptidoglycan transglycosylase (234 aa).

The helical transmembrane segment at 8–28 threads the bilayer; sequence VIGCFAAGVVALNLYFFAAIA.

The protein belongs to the glycosyltransferase 51 family.

The protein localises to the cell inner membrane. It carries out the reaction [GlcNAc-(1-&gt;4)-Mur2Ac(oyl-L-Ala-gamma-D-Glu-L-Lys-D-Ala-D-Ala)](n)-di-trans,octa-cis-undecaprenyl diphosphate + beta-D-GlcNAc-(1-&gt;4)-Mur2Ac(oyl-L-Ala-gamma-D-Glu-L-Lys-D-Ala-D-Ala)-di-trans,octa-cis-undecaprenyl diphosphate = [GlcNAc-(1-&gt;4)-Mur2Ac(oyl-L-Ala-gamma-D-Glu-L-Lys-D-Ala-D-Ala)](n+1)-di-trans,octa-cis-undecaprenyl diphosphate + di-trans,octa-cis-undecaprenyl diphosphate + H(+). Its pathway is cell wall biogenesis; peptidoglycan biosynthesis. Peptidoglycan polymerase that catalyzes glycan chain elongation from lipid-linked precursors. The sequence is that of Biosynthetic peptidoglycan transglycosylase from Ralstonia nicotianae (strain ATCC BAA-1114 / GMI1000) (Ralstonia solanacearum).